The primary structure comprises 485 residues: Glutamate--tRNA ligase (485 aa).

A 'HIGH' region motif is present at residues 11–21; sequence PSPTGYMHVGN. Residues Cys-108, Cys-110, Cys-135, and Asp-137 each coordinate Zn(2+). The 'KMSKS' region motif lies at 252 to 256; it reads KLSKR. Lys-255 contacts ATP.

Belongs to the class-I aminoacyl-tRNA synthetase family. Glutamate--tRNA ligase type 1 subfamily. In terms of assembly, monomer. Zn(2+) serves as cofactor.

Its subcellular location is the cytoplasm. It catalyses the reaction tRNA(Glu) + L-glutamate + ATP = L-glutamyl-tRNA(Glu) + AMP + diphosphate. Functionally, catalyzes the attachment of glutamate to tRNA(Glu) in a two-step reaction: glutamate is first activated by ATP to form Glu-AMP and then transferred to the acceptor end of tRNA(Glu). The protein is Glutamate--tRNA ligase of Clostridium botulinum (strain Loch Maree / Type A3).